We begin with the raw amino-acid sequence, 616 residues long: MKQSNMLIPTLREMPSDAQVISHALMVRAGYVRQVSAGIYSYLPLAHRVIEKIKKIMREEFDKIGAVEMLAPALLTADLWRESGRYGTYGEDLYKLKNRDQSDFILGPTHEETFTNLIRDAVKSYKQLPLNLYQIQAKYRDEKRPRNGLLRTREFIMKDGYSFHADYDSLDATYEDYRKAYEAIFTRVGLDFKAIIGDGGAMGGKDSQEFMAVTPDRTDLEHWLVLDKAIGSIEEIPADVLKEIKQELSSWLISGEDTIAYSSESDYAANLEMATSEYKPNNKVVSHEDIQRIETPNCKTIDEVAAFLEIDPTQTIKTLLFIADDEPVVALLVGNDQVNEVKLKNYLGADFLEPANEEEAREIFSASFGSLGPVNLPENVKIVADRKVKNIGNAVVGANEDGYHLTGVNPERDFEAAYVDIREVCEGEASPDGRGVLKFARGIEIGHIFKLGTRYSESMGANILDENGRSIPIIMGSYGIGVSRILSAVIEQNARIFVNKTPKGAYRFSWGVNFPKTLAPFDVHLITVNVKDEVSQQLTAKVEESLVDAHYSVLTDNRNERIGSKFSDSDLIGLPIRVTVGKKASDGIVEVKIKSTGDTIEVNAENLLETLSILID.

Belongs to the class-II aminoacyl-tRNA synthetase family. ProS type 1 subfamily. Homodimer.

It localises to the cytoplasm. The enzyme catalyses tRNA(Pro) + L-proline + ATP = L-prolyl-tRNA(Pro) + AMP + diphosphate. Its function is as follows. Catalyzes the attachment of proline to tRNA(Pro) in a two-step reaction: proline is first activated by ATP to form Pro-AMP and then transferred to the acceptor end of tRNA(Pro). As ProRS can inadvertently accommodate and process non-cognate amino acids such as alanine and cysteine, to avoid such errors it has two additional distinct editing activities against alanine. One activity is designated as 'pretransfer' editing and involves the tRNA(Pro)-independent hydrolysis of activated Ala-AMP. The other activity is designated 'posttransfer' editing and involves deacylation of mischarged Ala-tRNA(Pro). The misacylated Cys-tRNA(Pro) is not edited by ProRS. The polypeptide is Proline--tRNA ligase (Streptococcus mutans serotype c (strain ATCC 700610 / UA159)).